Here is a 668-residue protein sequence, read N- to C-terminus: CLK4-associating serine/arginine rich protein (668 aa).

Ser101 bears the Phosphoserine mark. Disordered stretches follow at residues 173–232 and 252–668; these read AEVE…GMAD and AKAL…HYRH. A compositionally biased stretch (acidic residues) spans 182–214; sequence PEEEESPAEEESNSDEDEVIPDIDVEVDVDELN. Basic residues predominate over residues 265-283; sequence RRSRRQRREFREKRLRGRK. Residues Ser285 and Ser294 each carry the phosphoserine modification. A compositionally biased stretch (basic and acidic residues) spans 290–313; sequence ARRDSPTYDPYKRSPSESSSESRS. Residue Thr327 is modified to Phosphothreonine. Residues Ser331 and Ser335 each carry the phosphoserine modification. The span at 340–353 shows a compositional bias: low complexity; it reads AAAAAAAAASGAAP. A compositionally biased stretch (pro residues) spans 354–365; that stretch reads GKPPAPPQPGGP. A compositionally biased stretch (low complexity) spans 378–395; that stretch reads SSSSASRTSSSRSSSRSS. Basic residues predominate over residues 396-435; it reads SRSRRGYYRSGRHARSRSRSWSRSRSRSRRYSRSRSRGRR. Residues 436–446 are compositionally biased toward basic and acidic residues; sequence HSDGGSRDGHR. Residues 475–486 are compositionally biased toward basic residues; the sequence is RGARGPRHHSSS. Composition is skewed to low complexity over residues 487–510 and 518–527; these read HSRSSWSLSPSRSRSLTRSGSRSQ and QSHSQSQSHS. Ser541 is modified (phosphoserine). Phosphothreonine is present on Thr567. A coiled-coil region spans residues 579–641; that stretch reads ALNRQFKADK…ERQYSRQSRS (63 aa). 2 stretches are compositionally biased toward basic and acidic residues: residues 584–611 and 619–635; these read FKADKKAAQEKMIQQEHERQEREDELRA and KERERREKEREEWERQY. Residues 636–645 show a composition bias toward low complexity; sequence SRQSRSPSPR. The segment covering 653–668 has biased composition (basic residues); sequence SRRRSRSRSRSPHYRH.

The protein belongs to the splicing factor SR family. In terms of assembly, probably interacts with CLK4. Phosphorylated in vitro by CLK4.

It localises to the nucleus. Probably functions as an alternative splicing regulator. May regulate the mRNA splicing of genes such as CLK1. May act by regulating members of the CLK kinase family. The sequence is that of CLK4-associating serine/arginine rich protein (Clasrp) from Rattus norvegicus (Rat).